A 493-amino-acid polypeptide reads, in one-letter code: MSESELNISELKKVRLEKLAELKEMGIEPFGRRFERDSMAQNIKEAFSELEGKTIAIAGRIMSKRRHGKAGFANLADLSGSIQLYFRQDDLGPEKYELYKKLDIGDILGIQGEVFRTQKGEISIHVRDLYYLSKSLTPLPEKWHGLKDVELRYRQRYVDLIVNPEVKEVFVKRSRIIKEMRNYLDDRGFLEVETPMMQPIPGGATARPFITHHNALDMELYLRIAPELYLKRLIVGGLEKVYEINRNFRNEGISTRHNPEFTMLEIYQAYGDYEVMMQLCEDLISAVMLKVNGSMQIDFEGEQLDFTPPWRRVTMLDAIKEAAGLDFSLIKSDEDACQAAWQLGLEVKAGASRGELINEIFEQFVEDKLIQPTFVYGHPVEVSPLAKRNLETPEFTDRFELFIMQREIANAFSELNDPIDQKERFIKQVEKRAGGDAEAHMMDEDYINALEYGMPPAGGMGIGIDRLVMLMTGSPSIRDVILFPTLRPRSSEA.

Residues Glu400 and Glu407 each coordinate Mg(2+).

This sequence belongs to the class-II aminoacyl-tRNA synthetase family. In terms of assembly, homodimer. Mg(2+) is required as a cofactor.

It localises to the cytoplasm. The enzyme catalyses tRNA(Lys) + L-lysine + ATP = L-lysyl-tRNA(Lys) + AMP + diphosphate. This chain is Lysine--tRNA ligase, found in Syntrophomonas wolfei subsp. wolfei (strain DSM 2245B / Goettingen).